A 424-amino-acid chain; its full sequence is Dihydroorotase (424 aa).

Residues H61 and H63 each contribute to the Zn(2+) site. Residues 63-65 (HLR) and N95 each bind substrate. The Zn(2+) site is built by D153, H180, and H233. Residue N279 coordinates substrate. D306 contacts Zn(2+). D306 is a catalytic residue. Residue H310 participates in substrate binding.

Belongs to the metallo-dependent hydrolases superfamily. DHOase family. Class I DHOase subfamily. The cofactor is Zn(2+).

It carries out the reaction (S)-dihydroorotate + H2O = N-carbamoyl-L-aspartate + H(+). The protein operates within pyrimidine metabolism; UMP biosynthesis via de novo pathway; (S)-dihydroorotate from bicarbonate: step 3/3. Catalyzes the reversible cyclization of carbamoyl aspartate to dihydroorotate. The protein is Dihydroorotase of Pelobacter propionicus (strain DSM 2379 / NBRC 103807 / OttBd1).